A 437-amino-acid polypeptide reads, in one-letter code: Methylenetetrahydrofolate--tRNA-(uracil-5-)-methyltransferase TrmFO (437 aa).

Residue 10-15 (GGGLAG) coordinates FAD.

The protein belongs to the MnmG family. TrmFO subfamily. Requires FAD as cofactor.

The protein resides in the cytoplasm. The enzyme catalyses uridine(54) in tRNA + (6R)-5,10-methylene-5,6,7,8-tetrahydrofolate + NADH + H(+) = 5-methyluridine(54) in tRNA + (6S)-5,6,7,8-tetrahydrofolate + NAD(+). It carries out the reaction uridine(54) in tRNA + (6R)-5,10-methylene-5,6,7,8-tetrahydrofolate + NADPH + H(+) = 5-methyluridine(54) in tRNA + (6S)-5,6,7,8-tetrahydrofolate + NADP(+). In terms of biological role, catalyzes the folate-dependent formation of 5-methyl-uridine at position 54 (M-5-U54) in all tRNAs. The protein is Methylenetetrahydrofolate--tRNA-(uracil-5-)-methyltransferase TrmFO of Geotalea daltonii (strain DSM 22248 / JCM 15807 / FRC-32) (Geobacter daltonii).